A 64-amino-acid polypeptide reads, in one-letter code: Conotoxin mr5.1a (64 aa).

An N-terminal signal peptide occupies residues Met1–Ser19. The propeptide occupies Val20–Asn48. A 4-carboxyglutamate modification is found at Glu60.

Belongs to the conotoxin T superfamily. Post-translationally, contains 2 disulfide bonds that can be either 'C1-C3, C2-C4' or 'C1-C4, C2-C3', since these disulfide connectivities have been observed for conotoxins with cysteine framework V (for examples, see AC P0DQQ7 and AC P81755). Expressed by the venom duct.

Its subcellular location is the secreted. The protein is Conotoxin mr5.1a of Conus marmoreus (Marble cone).